Reading from the N-terminus, the 668-residue chain is Protein-glutamine gamma-glutamyltransferase (668 aa).

The Cytoplasmic portion of the chain corresponds to 1–6 (MNAIPR). The chain crosses the membrane as a helical span at residues 7–27 (VALVWLLVAQVLVILPHLAYM). Residues 28-50 (PLWIAAMWLGCAAWRVQVFRMRA) lie on the Periplasmic side of the membrane. The helical transmembrane segment at 51–71 (GYPRAWVKLALALLAGAGVWL) threads the bilayer. Residues 72–74 (SRG) lie on the Cytoplasmic side of the membrane. A helical transmembrane segment spans residues 75–95 (SLVGLDAGAVLLIAAFILKLV). The Periplasmic portion of the chain corresponds to 96–103 (EMKTRRDA). The next 2 helical transmembrane spans lie at 104–124 (LVLVFLGFFAVVVGYLFDDGF) and 125–145 (LAALYSLLPVTALLAALIGLQ). The Cytoplasmic portion of the chain corresponds to 146–158 (QSAFASRPWPTLR). Residues 159-179 (LAGGLLLQALPLMLLLFLFFP) form a helical membrane-spanning segment. At 180–548 (RLGPLWSLPM…FGGLDPTRLG (369 aa)) the chain is on the periplasmic side. Catalysis depends on Cys404, which acts as the Nucleophile. Active-site residues include His448 and Asp464. The helical transmembrane segment at 549 to 569 (LLLGAAAILSVGLLALFLLKP) threads the bilayer. Over 570–668 (WQGRGDLRSR…TRDGRGEEQA (99 aa)) the chain is Cytoplasmic.

Belongs to the transglutaminase-like superfamily.

It localises to the cell inner membrane. It carries out the reaction L-glutaminyl-[protein] + L-lysyl-[protein] = [protein]-L-lysyl-N(6)-5-L-glutamyl-[protein] + NH4(+). Displays transglutaminase activity (TGase) in vitro. Plays a critical role in the viability of P.aeruginosa. Might contribute to an essential function linked to the cell wall. The polypeptide is Protein-glutamine gamma-glutamyltransferase (tgpA) (Pseudomonas aeruginosa (strain ATCC 15692 / DSM 22644 / CIP 104116 / JCM 14847 / LMG 12228 / 1C / PRS 101 / PAO1)).